We begin with the raw amino-acid sequence, 59 residues long: Large ribosomal subunit protein uL30 (59 aa).

It belongs to the universal ribosomal protein uL30 family. As to quaternary structure, part of the 50S ribosomal subunit.

This Listeria innocua serovar 6a (strain ATCC BAA-680 / CLIP 11262) protein is Large ribosomal subunit protein uL30.